The chain runs to 258 residues: Ciliogenesis and planar polarity effector 2 (258 aa).

Residues 50–258 (SIDTASYKIF…LPNPPESAPE (209 aa)) form a small GTPase-like region. Residues serine 64, glycine 65, glycine 67, lysine 68, threonine 69, alanine 70, valine 82, histidine 84, threonine 87, lysine 176, aspartate 178, and serine 206 each coordinate GTP.

Belongs to the small GTPase superfamily. Rab family. In terms of assembly, interacts with FUZ. Associates with the CPLANE (ciliogenesis and planar polarity effectors) complex via its interaction with FUZ.

The protein resides in the cytoplasm. It localises to the cytoskeleton. The protein localises to the cilium basal body. It is found in the microtubule organizing center. Its subcellular location is the centrosome. The protein resides in the centriole. Required for efficient primary cilia initiation, regulating a late step in cilia initiation. Plays a role in the final maturation of the mother centriole and ciliary vesicle that allows extension of the ciliary axoneme. This is Ciliogenesis and planar polarity effector 2 from Homo sapiens (Human).